The sequence spans 466 residues: Vacuolar-processing enzyme delta-isozyme (466 aa).

The N-terminal stretch at 1-24 (MSSPLGHFQILVFLHALLIFSAES) is a signal peptide. Asn-137 is a glycosylation site (N-linked (GlcNAc...) asparagine). Residue His-164 is part of the active site. Cys-206 functions as the Nucleophile in the catalytic mechanism. A disulfide bridge links Cys-239 with Cys-253. The N-linked (GlcNAc...) asparagine glycan is linked to Asn-322. 2 disulfide bridges follow: Cys-417–Cys-447 and Cys-429–Cys-464.

This sequence belongs to the peptidase C13 family. In terms of processing, auto-catalytic activation. As to expression, seed specific. Restricted to developing seeds at 7 days after anthesis, and, at lower levels, detected in flowers. Detected in siliques, specifically in seed coats (at protein level).

The protein localises to the secreted. The protein resides in the extracellular space. It is found in the cell wall. It localises to the vacuole. The enzyme catalyses Hydrolysis of proteins and small molecule substrates at -Asn-|-Xaa- bonds.. Strongly inhibited by biotin-YVAD-fmk (a caspase-1 inhibitor) and by Ac-DEVD-fmk. Functionally, asparagine-specific endopeptidase that may be involved in processing of proteins targeted to vacuoles. Probably involved in post-translational proteolysis of seed storage proteins in the protein storage vacuole of developing seeds. Exhibits a caspase-1-like activity in extracellular granules. At the early stage of seed development, required for the formation of the seed coat, by regulating cell death of specific cell layers in inner integument. The sequence is that of Vacuolar-processing enzyme delta-isozyme from Arabidopsis thaliana (Mouse-ear cress).